The following is a 295-amino-acid chain: Acetylglutamate kinase (295 aa).

Substrate is bound by residues 61–62 (GG), Arg83, and Asn187.

The protein belongs to the acetylglutamate kinase family. ArgB subfamily.

The protein localises to the cytoplasm. The enzyme catalyses N-acetyl-L-glutamate + ATP = N-acetyl-L-glutamyl 5-phosphate + ADP. Its pathway is amino-acid biosynthesis; L-arginine biosynthesis; N(2)-acetyl-L-ornithine from L-glutamate: step 2/4. Its function is as follows. Catalyzes the ATP-dependent phosphorylation of N-acetyl-L-glutamate. The sequence is that of Acetylglutamate kinase from Methanocorpusculum labreanum (strain ATCC 43576 / DSM 4855 / Z).